Consider the following 559-residue polypeptide: Glutamine--tRNA ligase (559 aa).

The short motif at 36–46 (PEPNGYLHLGH) is the 'HIGH' region element. ATP contacts are provided by residues 37–39 (EPN) and 43–49 (HLGHAKS). Residues Asp69 and Tyr214 each contribute to the L-glutamine site. Residues Thr233, 263–264 (RL), and 271–273 (LSK) each bind ATP. The short motif at 270 to 274 (LLSKR) is the 'KMSKS' region element.

Belongs to the class-I aminoacyl-tRNA synthetase family. Monomer.

It is found in the cytoplasm. The catalysed reaction is tRNA(Gln) + L-glutamine + ATP = L-glutaminyl-tRNA(Gln) + AMP + diphosphate. The protein is Glutamine--tRNA ligase of Nitrobacter winogradskyi (strain ATCC 25391 / DSM 10237 / CIP 104748 / NCIMB 11846 / Nb-255).